The chain runs to 98 residues: Large ribosomal subunit protein bL27 (98 aa).

Positions 1–22 (MAHKKGTGSTRNGRDSNAQRLG) are disordered. A compositionally biased stretch (polar residues) spans 7–19 (TGSTRNGRDSNAQ).

The protein belongs to the bacterial ribosomal protein bL27 family.

This Nostoc punctiforme (strain ATCC 29133 / PCC 73102) protein is Large ribosomal subunit protein bL27.